The following is a 114-amino-acid chain: Putative antiporter subunit mnhC2 (114 aa).

A run of 3 helical transmembrane segments spans residues 3–23 (LILLLVIGFLVFIGTYMILSI), 28–48 (IVIGISIYTHAGNLIIMSMGT), and 72–92 (AIVLTAIVIGFGMTAFLLVLV).

The protein belongs to the CPA3 antiporters (TC 2.A.63) subunit C family. In terms of assembly, may form a heterooligomeric complex that consists of seven subunits: mnhA2, mnhB2, mnhC2, mnhD2, mnhE2, mnhF2 and mnhG2.

The protein resides in the cell membrane. The protein is Putative antiporter subunit mnhC2 (mnhC2) of Staphylococcus aureus (strain MRSA252).